The chain runs to 284 residues: MTPAVTQTILTVRIARPHGYGYVLLSRGFSALNRPPPNYPGHIPLTTIERGALAVGSAIGSLLNPRRGDLIAALGEATATPYFIYRLRDAMLSDPTGRRILRDRPRISSKTLSIEYLRSLPPNTVGRTYVGWLDREGVGPDTRAPVQYIDDEECAYVMQRYRECHDFYHAITGLPVVVEGEVALKTFEFANTLLPMTGLSMFAVMRLKPAERERFWKLHLPWAIRSGLASKEVINVYWEEQLERDANELREELGIEKPADLREIRKMMRRQKAAEEAAKAKDGQ.

The Zn(2+) site is built by His165, Asp166, His169, and Glu181.

This sequence belongs to the COQ4 family. As to quaternary structure, component of a multi-subunit COQ enzyme complex, composed of at least COQ3, COQ4, COQ5, COQ6, COQ7 and COQ9. It depends on Zn(2+) as a cofactor.

The protein localises to the mitochondrion inner membrane. The catalysed reaction is a 4-hydroxy-3-methoxy-5-(all-trans-polyprenyl)benzoate + H(+) = a 2-methoxy-6-(all-trans-polyprenyl)phenol + CO2. Its pathway is cofactor biosynthesis; ubiquinone biosynthesis. Its function is as follows. Lyase that catalyzes the C1-decarboxylation of 4-hydroxy-3-methoxy-5-(all-trans-polyprenyl)benzoic acid into 2-methoxy-6-(all-trans-polyprenyl)phenol during ubiquinone biosynthesis. This is Ubiquinone biosynthesis protein COQ4, mitochondrial from Ajellomyces dermatitidis (strain ER-3 / ATCC MYA-2586) (Blastomyces dermatitidis).